The sequence spans 290 residues: MYG1 protein CPn_0489/CP_0265/CPj0489/CpB0509 (290 aa).

This sequence belongs to the MYG1 family.

The polypeptide is MYG1 protein CPn_0489/CP_0265/CPj0489/CpB0509 (Chlamydia pneumoniae (Chlamydophila pneumoniae)).